A 410-amino-acid polypeptide reads, in one-letter code: Putative ankyrin repeat protein FPV240 (410 aa).

ANK repeat units lie at residues 33–62 (NGYSPIKMAVRLRDVEMIKLLMSYNTYPDY), 66–95 (DIESELHEAVEEGDVVKVEELLDSGKFIND), 100–129 (KGNTPLHLATISKNLDMMRLLIARGADTDV), 133–162 (DRFTPLHLAVMSKDIKGIELLLDHRACTNI), 166–195 (YGCTPLIIAMSKGDTEVCRMLLDSGANIDY), and 200–229 (PCVTAMCYAIQNNKIDMVSMFLKRGADSNI).

The protein is Putative ankyrin repeat protein FPV240 of Vertebrata (FPV).